A 451-amino-acid polypeptide reads, in one-letter code: tRNA-2-methylthio-N(6)-dimethylallyladenosine synthase (451 aa).

Residues 6 to 122 (RHYHITTFGC…LQDLLEQVFN (117 aa)) form the MTTase N-terminal domain. Cys15, Cys51, Cys85, Cys157, Cys161, and Cys164 together coordinate [4Fe-4S] cluster. The Radical SAM core domain occupies 143–380 (RDSKITAWVN…NHLVGVKAAD (238 aa)). The TRAM domain maps to 383-447 (QRYMGRIEEV…PFSLTGEVKE (65 aa)).

This sequence belongs to the methylthiotransferase family. MiaB subfamily. In terms of assembly, monomer. The cofactor is [4Fe-4S] cluster.

It localises to the cytoplasm. It carries out the reaction N(6)-dimethylallyladenosine(37) in tRNA + (sulfur carrier)-SH + AH2 + 2 S-adenosyl-L-methionine = 2-methylsulfanyl-N(6)-dimethylallyladenosine(37) in tRNA + (sulfur carrier)-H + 5'-deoxyadenosine + L-methionine + A + S-adenosyl-L-homocysteine + 2 H(+). Functionally, catalyzes the methylthiolation of N6-(dimethylallyl)adenosine (i(6)A), leading to the formation of 2-methylthio-N6-(dimethylallyl)adenosine (ms(2)i(6)A) at position 37 in tRNAs that read codons beginning with uridine. In Trichodesmium erythraeum (strain IMS101), this protein is tRNA-2-methylthio-N(6)-dimethylallyladenosine synthase.